Consider the following 377-residue polypeptide: Probable G-protein coupled receptor 27 (377 aa).

Topologically, residues 1-24 are extracellular; that stretch reads MANASEPGGGGGGAEAAALGLRLA. Residue asparagine 3 is glycosylated (N-linked (GlcNAc...) asparagine). The helical transmembrane segment at 25-45 threads the bilayer; it reads TLSLLLCVSLAGNVLFALLIV. Topologically, residues 46–56 are cytoplasmic; sequence RERSLHRAPYY. The chain crosses the membrane as a helical span at residues 57–77; it reads LLLDLCLADGLRALACLPAVM. The Extracellular segment spans residues 78–98; the sequence is LAARRAAAAAGTPPGALGCKL. The cysteines at positions 96 and 173 are disulfide-linked. Residues 99 to 119 form a helical membrane-spanning segment; sequence LAFLAALFCFHAAFLLLGVGV. At 120-140 the chain is on the cytoplasmic side; that stretch reads TRYLAIAHHRFYAERLAGWPC. Residues 141–161 traverse the membrane as a helical segment; sequence AAMLVCAAWALALAAAFPPVL. The Extracellular segment spans residues 162–183; it reads DGGGADDEDAPCALEQRPDGAP. A helical transmembrane segment spans residues 184–204; it reads GALGFLLLLAAVVGATHLVYL. The Cytoplasmic segment spans residues 205-287; it reads RLLFFIHDRR…FKTEKRLCKM (83 aa). A helical membrane pass occupies residues 288–308; that stretch reads FYAITLLFLLLWGPYVVASYL. Residues 309-322 are Extracellular-facing; sequence RVLVRPGAVPQAYL. Residues 323-343 form a helical membrane-spanning segment; that stretch reads TASVWLTFAQAGINPVVCFLF. The Cytoplasmic portion of the chain corresponds to 344–377; sequence NRELRDCFRAQFPCCQSPQATQATLPCDLKGIGL.

Belongs to the G-protein coupled receptor 1 family. Expressed as a 3.0 kb transcript, in whole brain, hippocampus, striatum, frontal cortex, thalamus, pons and hypothalamus. A lower molecular weight transcript was detected in all regions examined, except the hypothalamus.

It localises to the cell membrane. In terms of biological role, orphan receptor. Possible candidate for amine-like G-protein coupled receptor. The protein is Probable G-protein coupled receptor 27 (Gpr27) of Rattus norvegicus (Rat).